The primary structure comprises 790 residues: Sorting nexin mvp1 (790 aa).

2 stretches are compositionally biased toward polar residues: residues 1–10 (MSLFGSSPPN) and 20–40 (KTAN…TRSG). Disordered stretches follow at residues 1–62 (MSLF…RKQR), 215–342 (PNLS…SIHN), and 373–406 (AITG…HVRS). A compositionally biased stretch (pro residues) spans 225-240 (PQRPVTPPKAPTPSPP). A compositionally biased stretch (low complexity) spans 241–252 (KQQQQQQHQPPT). The segment covering 269–283 (DLHKGHNHGPLEHST) has biased composition (basic and acidic residues). A compositionally biased stretch (polar residues) spans 297–319 (NDLNGNDAVSYSTSPEVTTTSSA). Low complexity-rich tracts occupy residues 324 to 339 (TTST…GPSS) and 386 to 400 (QSVS…PNRS). A PX domain is found at 411–525 (EENILVTLMP…IMFLTVPTEL (115 aa)). The a 1,2-diacyl-sn-glycero-3-phospho-(1D-myo-inositol-3-phosphate) site is built by arginine 447, serine 449, lysine 473, and arginine 492.

The protein belongs to the sorting nexin family.

It is found in the cytoplasm. Its subcellular location is the membrane. Its function is as follows. Required for vacuolar protein sorting. The sequence is that of Sorting nexin mvp1 (vsp-1) from Neurospora crassa (strain ATCC 24698 / 74-OR23-1A / CBS 708.71 / DSM 1257 / FGSC 987).